The following is a 121-amino-acid chain: Large ribosomal subunit protein uL18 (121 aa).

Positions 63–88 are disordered; the sequence is AAIRPDPSPKKSQKQPPKTHKRYNLK. Basic residues predominate over residues 73–87; it reads KSQKQPPKTHKRYNL.

The protein belongs to the universal ribosomal protein uL18 family. In terms of assembly, component of the large ribosomal subunit (LSU).

The protein resides in the cytoplasm. The protein localises to the nucleus. In terms of biological role, component of the ribosome, a large ribonucleoprotein complex responsible for the synthesis of proteins in the cell. The small ribosomal subunit (SSU) binds messenger RNAs (mRNAs) and translates the encoded message by selecting cognate aminoacyl-transfer RNA (tRNA) molecules. The large subunit (LSU) contains the ribosomal catalytic site termed the peptidyl transferase center (PTC), which catalyzes the formation of peptide bonds, thereby polymerizing the amino acids delivered by tRNAs into a polypeptide chain. The nascent polypeptides leave the ribosome through a tunnel in the LSU and interact with protein factors that function in enzymatic processing, targeting, and the membrane insertion of nascent chains at the exit of the ribosomal tunnel. The polypeptide is Large ribosomal subunit protein uL18 (RPL5) (Solanum melongena (Eggplant)).